Reading from the N-terminus, the 508-residue chain is Potassium/proton antiporter CemA (508 aa).

5 helical membrane-spanning segments follow: residues Leu-66 to Leu-86, Tyr-282 to Ser-302, Ile-386 to Gly-406, Ile-433 to Ile-453, and Ile-468 to Ile-488.

Belongs to the CemA family.

The protein resides in the plastid. It localises to the chloroplast inner membrane. The catalysed reaction is K(+)(in) + H(+)(out) = K(+)(out) + H(+)(in). Functionally, contributes to K(+)/H(+) antiport activity by supporting proton efflux to control proton extrusion and homeostasis in chloroplasts in a light-dependent manner to modulate photosynthesis. Prevents excessive induction of non-photochemical quenching (NPQ) under continuous-light conditions. Indirectly promotes efficient inorganic carbon uptake into chloroplasts. The protein is Potassium/proton antiporter CemA of Anthoceros angustus (Hornwort).